Reading from the N-terminus, the 153-residue chain is MANSNLPRRIIKETQRLLSEPAPGISASPSEENMRYFNVMILGPTQSPYEGGVFKLELFLPEEYPMAAPKVRFLTKIYHPNIDKLGRICLDILKDKWSPALQIRTVLLSIQALLSAPNPDDPLSENIAKHWKSNEAEAVETAKEWTRLYASGA.

The UBC core domain maps to 5-151 (NLPRRIIKET…AKEWTRLYAS (147 aa)). C89 functions as the Glycyl thioester intermediate in the catalytic mechanism.

This sequence belongs to the ubiquitin-conjugating enzyme family. In terms of assembly, interacts with yeast and human Mms2, with the RING domain of RGLG2 and with UEV1A, UEV1B, UEV1C and UEV1D. As to expression, ubiquitously expressed at low level.

The enzyme catalyses S-ubiquitinyl-[E1 ubiquitin-activating enzyme]-L-cysteine + [E2 ubiquitin-conjugating enzyme]-L-cysteine = [E1 ubiquitin-activating enzyme]-L-cysteine + S-ubiquitinyl-[E2 ubiquitin-conjugating enzyme]-L-cysteine.. It functions in the pathway protein modification; protein ubiquitination. Functionally, catalyzes the synthesis of non-canonical poly-ubiquitin chains that are linked through 'Lys-63'. This type of poly-ubiquitination does not lead to protein degradation by the proteasome. Mediates transcriptional activation of target genes. Required for postreplication repair of UV-damaged DNA and for adapting root developmental programs to suboptimal availability of iron. The chain is Ubiquitin-conjugating enzyme E2 36 (UBC36) from Arabidopsis thaliana (Mouse-ear cress).